Reading from the N-terminus, the 119-residue chain is NAD(P)H-quinone oxidoreductase subunit M (119 aa).

This sequence belongs to the complex I NdhM subunit family. In terms of assembly, NDH-1 can be composed of about 15 different subunits; different subcomplexes with different compositions have been identified which probably have different functions.

The protein resides in the cellular thylakoid membrane. It carries out the reaction a plastoquinone + NADH + (n+1) H(+)(in) = a plastoquinol + NAD(+) + n H(+)(out). The enzyme catalyses a plastoquinone + NADPH + (n+1) H(+)(in) = a plastoquinol + NADP(+) + n H(+)(out). NDH-1 shuttles electrons from an unknown electron donor, via FMN and iron-sulfur (Fe-S) centers, to quinones in the respiratory and/or the photosynthetic chain. The immediate electron acceptor for the enzyme in this species is believed to be plastoquinone. Couples the redox reaction to proton translocation, and thus conserves the redox energy in a proton gradient. Cyanobacterial NDH-1 also plays a role in inorganic carbon-concentration. In Crocosphaera subtropica (strain ATCC 51142 / BH68) (Cyanothece sp. (strain ATCC 51142)), this protein is NAD(P)H-quinone oxidoreductase subunit M.